The primary structure comprises 137 residues: MKQRTLSIIKPDALKKKVVGKIIDRFESNGLEVVAMKRLHLSVKDAENFYAIHRERPFFKDLIEFMVSGPVVVMVLEGKDAVAKNRDLMGATDPKLAQKGTIRADFAESIDANAVHGSDSLENAHNEIAFFFAARDL.

ATP-binding residues include Lys-10, Phe-58, Arg-86, Thr-92, Arg-103, and Asn-113. Catalysis depends on His-116, which acts as the Pros-phosphohistidine intermediate.

It belongs to the NDK family. As to quaternary structure, homotetramer. Mg(2+) serves as cofactor.

It localises to the cytoplasm. The catalysed reaction is a 2'-deoxyribonucleoside 5'-diphosphate + ATP = a 2'-deoxyribonucleoside 5'-triphosphate + ADP. It carries out the reaction a ribonucleoside 5'-diphosphate + ATP = a ribonucleoside 5'-triphosphate + ADP. Functionally, major role in the synthesis of nucleoside triphosphates other than ATP. The ATP gamma phosphate is transferred to the NDP beta phosphate via a ping-pong mechanism, using a phosphorylated active-site intermediate. This chain is Nucleoside diphosphate kinase, found in Helicobacter pylori (strain ATCC 700392 / 26695) (Campylobacter pylori).